Consider the following 258-residue polypeptide: Ribonuclease HII (258 aa).

The RNase H type-2 domain occupies 71–258 (QLIAGIDEVG…PIKTMVNFKS (188 aa)). The a divalent metal cation site is built by D77, E78, and D169.

It belongs to the RNase HII family. Mn(2+) is required as a cofactor. Mg(2+) serves as cofactor.

The protein resides in the cytoplasm. The enzyme catalyses Endonucleolytic cleavage to 5'-phosphomonoester.. Endonuclease that specifically degrades the RNA of RNA-DNA hybrids. The polypeptide is Ribonuclease HII (rnhB) (Lactococcus lactis subsp. lactis (strain IL1403) (Streptococcus lactis)).